Reading from the N-terminus, the 605-residue chain is Zinc metalloproteinase-disintegrin-like BfMP (605 aa).

The N-terminal stretch at 1–11 is a signal peptide; it reads MLVVFPYQGSS. Residues 12–179 constitute a propeptide that is removed on maturation; that stretch reads IILESGNVND…WESDEPFKNT (168 aa). N-linked (GlcNAc...) asparagine glycosylation is found at Asn178 and Asn215. One can recognise a Peptidase M12B domain in the interval 196–392; that stretch reads KYIEFYVAVD…DRPQCILNKP (197 aa). 17 disulfides stabilise this stretch: Cys307–Cys387, Cys347–Cys371, Cys350–Cys355, Cys403–Cys432, Cys414–Cys427, Cys416–Cys422, Cys426–Cys449, Cys440–Cys446, Cys445–Cys471, Cys458–Cys478, Cys465–Cys497, Cys490–Cys502, Cys509–Cys559, Cys524–Cys567, Cys537–Cys547, Cys554–Cys593, and Cys587–Cys598. His332 is a Zn(2+) binding site. Glu333 is an active-site residue. His336 and His342 together coordinate Zn(2+). The 87-residue stretch at 400-486 folds into the Disintegrin domain; sequence PAICGNYFVE…ECPTDIFRRN (87 aa). Residues 464–466 carry the D/ECD-tripeptide motif; the sequence is DCD.

The protein belongs to the venom metalloproteinase (M12B) family. P-III subfamily. P-IIIa sub-subfamily. In terms of assembly, monomer. Zn(2+) serves as cofactor. As to expression, expressed by the venom gland.

It is found in the secreted. In terms of biological role, snake venom zinc metalloproteinase that inhibits platelet aggregation and degrades fibrinogen. The protein is Zinc metalloproteinase-disintegrin-like BfMP of Bungarus fasciatus (Banded krait).